The sequence spans 351 residues: MLFKKIRGLFSNDLSIDLGTANTLIYVKRQGIVLDEPSVVAIRQDRVGTLKSIAAVGKEAKLMLGRTPKSIVAIRPMKDGVIADFFVTEKMLQYFIKQVHSGNFMRPSPRVLVCVPAGATQVERRAIKESAIGAGAREVYLIEEPMAAAIGAKLPVSTAVGSMVIDIGGGTTEVAVISLNGIVYSSSVRIGGDRFDEAIISYVRRTFGSVIGEPTAERIKQEIGSAYIQEGDEIKEMEVHGHNLAEGAPRSFTLTSRDVLEAIQQPLNGIVAAVRTALEECQPEHAADIFERGMVLTGGGALLRNIDILLSKESGVPVIIAEDPLTCVARGGGEALEMIDMHGGDIFSDEI.

ATP is bound by residues 20 to 22 (TAN), 169 to 171 (GGT), 217 to 220 (ERIK), and 299 to 302 (GGAL).

This sequence belongs to the FtsA/MreB family. Forms polymers.

The protein localises to the cytoplasm. In terms of biological role, forms membrane-associated dynamic filaments that are essential for cell shape determination. Acts by regulating cell wall synthesis and cell elongation, and thus cell shape. A feedback loop between cell geometry and MreB localization may maintain elongated cell shape by targeting cell wall growth to regions of negative cell wall curvature. This Haemophilus influenzae (strain ATCC 51907 / DSM 11121 / KW20 / Rd) protein is Cell shape-determining protein MreB.